We begin with the raw amino-acid sequence, 227 residues long: ATP-dependent dethiobiotin synthetase BioD (227 aa).

ATP is bound at residue 13–18; that stretch reads EVGKSV. A Mg(2+)-binding site is contributed by S17. K38 is a catalytic residue. S42 is a substrate binding site. ATP is bound by residues D55, 116 to 119, and 176 to 177; these read EGAG and ND. The Mg(2+) site is built by D55 and E116.

The protein belongs to the dethiobiotin synthetase family. In terms of assembly, homodimer. Requires Mg(2+) as cofactor.

Its subcellular location is the cytoplasm. It catalyses the reaction (7R,8S)-7,8-diammoniononanoate + CO2 + ATP = (4R,5S)-dethiobiotin + ADP + phosphate + 3 H(+). The protein operates within cofactor biosynthesis; biotin biosynthesis; biotin from 7,8-diaminononanoate: step 1/2. In terms of biological role, catalyzes a mechanistically unusual reaction, the ATP-dependent insertion of CO2 between the N7 and N8 nitrogen atoms of 7,8-diaminopelargonic acid (DAPA, also called 7,8-diammoniononanoate) to form a ureido ring. In Serratia marcescens, this protein is ATP-dependent dethiobiotin synthetase BioD.